Consider the following 434-residue polypeptide: Glutamyl-tRNA reductase (434 aa).

Substrate is bound by residues 52–55 (TCNR), Ser115, 120–122 (ETQ), and Gln126. Cys53 functions as the Nucleophile in the catalytic mechanism. 195–200 (GAGEMI) lines the NADP(+) pocket.

This sequence belongs to the glutamyl-tRNA reductase family. Homodimer.

The enzyme catalyses (S)-4-amino-5-oxopentanoate + tRNA(Glu) + NADP(+) = L-glutamyl-tRNA(Glu) + NADPH + H(+). Its pathway is porphyrin-containing compound metabolism; protoporphyrin-IX biosynthesis; 5-aminolevulinate from L-glutamyl-tRNA(Glu): step 1/2. Catalyzes the NADPH-dependent reduction of glutamyl-tRNA(Glu) to glutamate 1-semialdehyde (GSA). This is Glutamyl-tRNA reductase from Cupriavidus metallidurans (strain ATCC 43123 / DSM 2839 / NBRC 102507 / CH34) (Ralstonia metallidurans).